Reading from the N-terminus, the 307-residue chain is uncharacterized protein (307 aa).

Positions 1–25 are cleaved as a signal peptide; sequence MKFQKRNIQLVLILLLILNNCFINS. The tract at residues 60–90 is disordered; the sequence is ENNNKNNNNNNNNNNNNNNNNKNSKVKNDDS. The segment covering 63 to 82 has biased composition (low complexity); it reads NKNNNNNNNNNNNNNNNNKN. Residues asparagine 124 and asparagine 173 are each glycosylated (N-linked (GlcNAc...) asparagine). 2 helical membrane passes run 244-264 and 275-295; these read IIFA…YYLA and IIGV…TIVI.

The protein localises to the membrane. This is an uncharacterized protein from Dictyostelium discoideum (Social amoeba).